The sequence spans 156 residues: Small ribosomal subunit protein uS7 (156 aa).

It belongs to the universal ribosomal protein uS7 family. Part of the 30S ribosomal subunit. Contacts proteins S9 and S11.

Its function is as follows. One of the primary rRNA binding proteins, it binds directly to 16S rRNA where it nucleates assembly of the head domain of the 30S subunit. Is located at the subunit interface close to the decoding center, probably blocks exit of the E-site tRNA. The protein is Small ribosomal subunit protein uS7 of Clostridium botulinum (strain Okra / Type B1).